Consider the following 267-residue polypeptide: Cysteine protease avirulence protein AvrPphB (267 aa).

Gly63 carries the N-myristoyl glycine; by host lipid modification. Catalysis depends on residues Cys98, His212, and Asp227.

It belongs to the peptidase C58 family. As to quaternary structure, in infected plant cells, the 28 kDa product interacts with PBS1. Autocleaved. This function is essential for myristoylation in infected plant cell and for eliciting the plant hypersensitive response. Post-translationally, myristoylation of 28 kDa product in infected plant cells; it mediates the localization to membranes.

The protein resides in the secreted. Its subcellular location is the host membrane. Cysteine protease avirulence protein, which is essential during infection of plant cells from cultivar-specific of beans and Arabidopsis thaliana. The autocleavage of the protein is required for virulence function. May act by affecting the plant defense system. In plants lacking R3 or RPS5 resistance genes, it probably impairs the plant defense system and leads to the bacteria multiplication. In contrast, in plants containing the R3 or RPS5 protein, it is unable to induce disease symptoms, explaining its avirulence name. The 7 kDa product is required for the type-III translocation from Pseudomonas strains to the plant, but are partially dispensable for effector recognition following in planta expression. In infected plants, it acts by cleaving the PBS1 protein, which leads to resistance or disease, depending on the presence or absence of RPS5, respectively. Targets the Arabidopsis kinases PBS1, BIK1, PBL1, PBL2, PBL3, PBL5, PBL7, PBL9 and PBL11 for cleavage in vitro. Can block recognition of AvrB avirulence factor by plant cells by cleaving Arabidopsis RIPK kinase and suppressing Arabidopsis RPM1 activation. Cannot block AvrRpm1-induced activation of RPM1. The polypeptide is Cysteine protease avirulence protein AvrPphB (avrPph3) (Pseudomonas savastanoi pv. phaseolicola (Pseudomonas syringae pv. phaseolicola)).